The sequence spans 224 residues: Ion-translocating oxidoreductase complex subunit E (224 aa).

5 consecutive transmembrane segments (helical) span residues 51–71, 81–101, 105–125, 140–160, and 194–214; these read LGLGIATLFVLICSNTVVSLF, IPIYVMIIATTVTVVQLLMNA, SLYQSLGIFIPLIVTNCIVIG, MFDGFAMGLGMCLSLVFLGAI, and HFLLAILPPGAFIGLGLILAI.

Belongs to the NqrDE/RnfAE family. The complex is composed of six subunits: RnfA, RnfB, RnfC, RnfD, RnfE and RnfG.

Its subcellular location is the cell inner membrane. Functionally, part of a membrane-bound complex that couples electron transfer with translocation of ions across the membrane. This is Ion-translocating oxidoreductase complex subunit E from Pasteurella multocida (strain Pm70).